Consider the following 616-residue polypeptide: MSKKKEASKISPVLFLDPGGQSMRFYVRPGPTKMQLHPLITSGGGNLCRNQEPGAILLIDPTDATNVTQNTGQKYISTKYILDCVEQNQQLDPNDYAIIIGPSVQTRMALRNQGSGRLGYSSEEDAAILKFIEKRQQDAKGNLVWKEMEKRHVTEHSWQSMKDRFLKHLQQKLADKPTKKSPIKRKPLSFTQSPLRKKKVVEISEDESVQKGDCPEAPMATETGSINPPASPERASSPPEEPQAAGQPSQASSNDSQDETCVLVIETPESENPRLDEDAPDASNEHSSLKKKRRKTCKTSTTDSRSSRLEEDPVGQDIPDESNAQSSPKKKRQKACKTSTTDSRSSRLEENPDRRDIPDESTEQSSPNKSQMTSKISTSDSGNPIGDQGCDNPHGCNANSSPSKTRQTNSEASTPDSKKLGILAKAAKEFEDSDVMDDSEECENPCEVPIAEPSDAQESSATPATLVREPESQAEHHEETQPDSPMSEEERPGPSSAVVPPSLNSSTSCSHIRETPEETLSRDLLEVKEQVINLMRETKKDLVEVTKALLKASGDLKRAQVFLLNGYDHETHGPLWTRLDDETLLAADPYELEQLQSKFGEEEVTRRKSFLATDVK.

One can recognise a BRCT domain in the interval Phe-15 to Ile-98. The 58-residue stretch at Asn-112 to Leu-169 folds into the Myb-like domain. The disordered stretch occupies residues Ala-174–Glu-518. Over residues Pro-232 to Ala-245 the composition is skewed to low complexity. Polar residues predominate over residues Gly-246–Asp-255. Basic and acidic residues-rich tracts occupy residues Glu-271–Ser-288 and Arg-344–Pro-358. 2 stretches are compositionally biased toward polar residues: residues Glu-363–Gly-382 and Asn-397–Pro-415. Positions Glu-431–Asn-444 are enriched in acidic residues. Positions Arg-468–Thr-480 are enriched in basic and acidic residues. Residues Ser-597 to Thr-613 carry the Nuclear localization signal motif.

Belongs to the RAP1 family. As to quaternary structure, homodimer. Component of the shelterin complex (telosome). Interacts with terf2; the interaction is direct.

Its subcellular location is the nucleus. The protein resides in the chromosome. It localises to the telomere. Acts both as a regulator of telomere function and as a transcription regulator. Involved in the regulation of telomere length and protection as a component of the shelterin complex (telosome). Does not bind DNA directly: recruited to telomeric double-stranded 5'-TTAGGG-3' repeats via its interaction with terf2. Independently of its function in telomeres, also acts as a transcription regulator: recruited to extratelomeric 5'-TTAGGG-3' sites via its association with terf2 or other factors, and regulates gene expression. The protein is Telomeric repeat-binding factor 2-interacting protein 1 (terf2ip) of Danio rerio (Zebrafish).